Reading from the N-terminus, the 248-residue chain is Probable transcriptional regulatory protein Ccel_0181 (248 aa).

The protein belongs to the TACO1 family.

The protein resides in the cytoplasm. The sequence is that of Probable transcriptional regulatory protein Ccel_0181 from Ruminiclostridium cellulolyticum (strain ATCC 35319 / DSM 5812 / JCM 6584 / H10) (Clostridium cellulolyticum).